We begin with the raw amino-acid sequence, 152 residues long: Protein-export protein SecB (152 aa).

This sequence belongs to the SecB family. In terms of assembly, homotetramer, a dimer of dimers. One homotetramer interacts with 1 SecA dimer.

It localises to the cytoplasm. Its function is as follows. One of the proteins required for the normal export of preproteins out of the cell cytoplasm. It is a molecular chaperone that binds to a subset of precursor proteins, maintaining them in a translocation-competent state. It also specifically binds to its receptor SecA. The chain is Protein-export protein SecB from Rickettsia peacockii (strain Rustic).